A 381-amino-acid polypeptide reads, in one-letter code: Diguanylate cyclase DosC (381 aa).

A heme-binding site is contributed by histidine 98. Positions 325–381 constitute a GGDEF domain; that stretch reads TPLSVLIIDVDKFKEINDTWGHNTGDEILRKVSFLSQKRLVKSKILGAGSSRKLAVS. Residue aspartate 333 coordinates Mg(2+). Substrate is bound by residues asparagine 341 and aspartate 350.

The cofactor is heme. Mg(2+) is required as a cofactor.

The catalysed reaction is 2 GTP = 3',3'-c-di-GMP + 2 diphosphate. The protein operates within purine metabolism; 3',5'-cyclic di-GMP biosynthesis. Its function is as follows. Globin-coupled heme-based oxygen sensor protein displaying diguanylate cyclase (DGC) activity in response to oxygen availability. Thus, catalyzes the synthesis of cyclic diguanylate (c-di-GMP) via the condensation of 2 GTP molecules. Cyclic-di-GMP is a second messenger which controls cell surface-associated traits in bacteria. The polypeptide is Diguanylate cyclase DosC (dosC) (Shigella flexneri).